Here is a 216-residue protein sequence, read N- to C-terminus: uncharacterized protein (216 aa).

This is an uncharacterized protein from Methylophilus leisingeri (strain DSM 6813 / VKM B-2013 / DM11).